Reading from the N-terminus, the 556-residue chain is uncharacterized protein (556 aa).

Disordered regions lie at residues Met-1 to Asn-40, Asn-80 to Trp-243, Tyr-278 to Pro-324, Arg-363 to Asp-391, and Asp-422 to Ala-525. The span at Asn-7–Asn-25 shows a compositional bias: low complexity. The segment covering Glu-30–Asn-40 has biased composition (acidic residues). Low complexity-rich tracts occupy residues Asn-80–Ser-133 and Asn-164–Asn-181. The span at Ile-182–Phe-192 shows a compositional bias: acidic residues. A compositionally biased stretch (low complexity) spans Ser-207 to Ser-226. Over residues Lys-227–Trp-243 the composition is skewed to polar residues. Composition is skewed to low complexity over residues Asn-292–Ser-322, Lys-369–Lys-388, and Gln-425–Ala-525. The chain crosses the membrane as a helical span at residues Gly-528–Phe-548.

It localises to the membrane. This is an uncharacterized protein from Dictyostelium discoideum (Social amoeba).